The sequence spans 405 residues: Cytoplasmic polyadenylated homeobox-like protein (405 aa).

2 disordered regions span residues 1-33 (MNLD…KHRH) and 340-363 (PWDL…QNNG). Residues 13–23 (EEDHHNEERQT) are compositionally biased toward basic and acidic residues. The span at 24 to 33 (KNKRKTKHRH) shows a compositional bias: basic residues. The segment at residues 28-87 (KTKHRHKFSEELLQELKEIFGENCYPDYTTRKTLAIKFDCPVNVIDNWFQNKRARLPPAE) is a DNA-binding region (homeobox). The segment covering 346–360 (QWSSAQSQLQSQLPQ) has biased composition (low complexity).

Its subcellular location is the nucleus. Its function is as follows. Transcription factor that acts as activator. This chain is Cytoplasmic polyadenylated homeobox-like protein, found in Homo sapiens (Human).